A 164-amino-acid chain; its full sequence is Phosphohistidine phosphatase SixA homolog (164 aa).

It belongs to the SixA phosphatase family.

The chain is Phosphohistidine phosphatase SixA homolog (sixA-A) from Haemophilus influenzae (strain ATCC 51907 / DSM 11121 / KW20 / Rd).